A 967-amino-acid polypeptide reads, in one-letter code: Nonsense-mediated mRNA decay factor SMG8 (967 aa).

The segment at Leu627–Ser702 is disordered. Over residues Asn628–Ser639 the composition is skewed to acidic residues. The span at Arg643–Ser666 shows a compositional bias: low complexity. A compositionally biased stretch (polar residues) spans Ala686 to Ser702.

The protein belongs to the SMG8 family.

Functionally, involved in nonsense-mediated decay (NMD) of mRNAs containing premature stop codons. Probable component of kinase complex containing nonC and recruited to stalled ribosomes. The protein is Nonsense-mediated mRNA decay factor SMG8 of Drosophila mojavensis (Fruit fly).